A 153-amino-acid chain; its full sequence is Interleukin-4 (153 aa).

The N-terminal stretch at 1–24 (MGLTSQLLPPLFFLLACAGNFVHG) is a signal peptide. Disulfide bonds link Cys27–Cys151, Cys48–Cys89, and Cys70–Cys123. N-linked (GlcNAc...) asparagine glycosylation occurs at Asn62.

Belongs to the IL-4/IL-13 family. As to quaternary structure, interacts with IL4R. Interacts with IL13RA1.

It is found in the secreted. Cytokine secreted primarily by mast cells, T-cells, eosinophils, and basophils that plays a role in regulating antibody production, hematopoiesis and inflammation, and the development of effector T-cell responses. Induces the expression of class II MHC molecules on resting B-cells. Enhances both secretion and cell surface expression of IgE and IgG1. Also regulates the expression of the low affinity Fc receptor for IgE (CD23) on both lymphocytes and monocytes. Positively regulates IL31RA expression in macrophages. Stimulates autophagy in dendritic cells by interfering with mTORC1 signaling and through the induction of RUFY4. In addition, plays a critical role in higher functions of the normal brain, such as memory and learning. Upon binding to IL4, IL4R receptor dimerizes either with the common IL2R gamma chain/IL2RG to produce the type 1 signaling complex, located mainly on hematopoietic cells, or with the IL13RA1 to produce the type 2 complex, which is also expressed on nonhematopoietic cells. Engagement of both types of receptors initiates JAK3 and to a lower extend JAK1 phosphorylation leading to activation of the signal transducer and activator of transcription 6/STAT6. The sequence is that of Interleukin-4 (IL4) from Homo sapiens (Human).